We begin with the raw amino-acid sequence, 420 residues long: Transcriptional adapter 2-beta (420 aa).

The ZZ-type zinc-finger motif lies at 4–59 (LGKKYCVYCLAEVSPLRFRCTECQDIELCPECFSAGAEIGHHRRYHGYQLVDGGRF). 8 residues coordinate Zn(2+): cysteine 9, cysteine 12, cysteine 23, cysteine 26, cysteine 32, cysteine 35, histidine 45, and histidine 49. An SANT domain is found at 65-118 (EAEGGWTSREEQLLLDAIEQFGFGNWEDMAAHVGASRTPQEVMEHYVSMYIHGN). The disordered stretch occupies residues 305–335 (SAEYEAARHKREKRKENKNLAGSKRGKEDGK).

As to quaternary structure, interacts with GCN5L2, SMARCA4, SMARCE1 and PAX5. Component of the TFTC-HAT complex.

Its subcellular location is the nucleus. Functionally, coactivates PAX5-dependent transcription together with either SMARCA4 or GCN5L2. The polypeptide is Transcriptional adapter 2-beta (TADA2B) (Homo sapiens (Human)).